The primary structure comprises 392 residues: Quinolinate synthase (392 aa).

Residues 1 to 23 (MVDLPTTTPPAQPTTGNDEVDAL) form a disordered region. Positions 57 and 74 each coordinate iminosuccinate. Position 131 (Cys131) interacts with [4Fe-4S] cluster. Iminosuccinate is bound by residues 163–165 (YIN) and Ser184. Cys254 lines the [4Fe-4S] cluster pocket. Residues 280-282 (HPE) and Thr297 contribute to the iminosuccinate site. Cys344 is a binding site for [4Fe-4S] cluster.

It belongs to the quinolinate synthase family. Type 3 subfamily. The cofactor is [4Fe-4S] cluster.

Its subcellular location is the cytoplasm. The catalysed reaction is iminosuccinate + dihydroxyacetone phosphate = quinolinate + phosphate + 2 H2O + H(+). The protein operates within cofactor biosynthesis; NAD(+) biosynthesis; quinolinate from iminoaspartate: step 1/1. Functionally, catalyzes the condensation of iminoaspartate with dihydroxyacetone phosphate to form quinolinate. This is Quinolinate synthase from Rhodopirellula baltica (strain DSM 10527 / NCIMB 13988 / SH1).